The following is an 808-amino-acid chain: Sucrose synthase (808 aa).

A GT-B glycosyltransferase region spans residues 271–753; that stretch reads MLFRIALISP…GIERVYSTYT (483 aa).

The protein belongs to the glycosyltransferase 1 family. Probably a homotetramer.

The catalysed reaction is an NDP-alpha-D-glucose + D-fructose = a ribonucleoside 5'-diphosphate + sucrose + H(+). The enzyme catalyses ADP-alpha-D-glucose + D-fructose = sucrose + ADP + H(+). Functionally, catalyzes the reversible conversion of sucrose and a nucleotide disphosphate (NDP) into fructose and NDP-glucose; although the reaction is freely reversible in vitro, the physiological reaction seems to be sucrose cleavage. Unlike characterized plant enzymes prefers ADP as a cosubstrate, whereas plants prefer UDP. Its preference for ADP over UDP suggests it may directly link sucrose and glycogen metabolism. In Thermosynechococcus vestitus (strain NIES-2133 / IAM M-273 / BP-1), this protein is Sucrose synthase.